Consider the following 344-residue polypeptide: Dihydroorotate dehydrogenase (quinone) (344 aa).

Residues 65-69 and T89 each bind FMN; that span reads AGFDK. K69 contacts substrate. 114 to 118 is a binding site for substrate; it reads NRMGF. The FMN site is built by N145 and N178. Residue N178 coordinates substrate. S181 acts as the Nucleophile in catalysis. Residue N183 participates in substrate binding. FMN is bound by residues K215 and T243. Residue 244-245 participates in substrate binding; that stretch reads NT. Residues G269, G298, and 319-320 contribute to the FMN site; that span reads YT.

The protein belongs to the dihydroorotate dehydrogenase family. Type 2 subfamily. As to quaternary structure, monomer. FMN serves as cofactor.

It is found in the cell membrane. The enzyme catalyses (S)-dihydroorotate + a quinone = orotate + a quinol. It participates in pyrimidine metabolism; UMP biosynthesis via de novo pathway; orotate from (S)-dihydroorotate (quinone route): step 1/1. In terms of biological role, catalyzes the conversion of dihydroorotate to orotate with quinone as electron acceptor. The protein is Dihydroorotate dehydrogenase (quinone) of Clavibacter michiganensis subsp. michiganensis (strain NCPPB 382).